We begin with the raw amino-acid sequence, 370 residues long: Alpha-ketoglutarate-dependent dioxygenase cnsP (370 aa).

Low complexity predominate over residues 1–12 (MSTTTVITPGTI). The segment at 1–20 (MSTTTVITPGTITREKNENG) is disordered. His131 contacts substrate. The Fe cation site is built by His169 and Asp171. Residue Thr197 participates in 2-oxoglutarate binding. A Fe cation-binding site is contributed by His321. Residues Arg333 and Arg337 each contribute to the 2-oxoglutarate site. Arg337 is a binding site for substrate.

It belongs to the TfdA dioxygenase family. Requires Fe(2+) as cofactor.

It functions in the pathway alkaloid biosynthesis. Functionally, alpha-ketoglutarate-dependent dioxygenase; part of the gene cluster that mediates the biosynthesis of communesins, a prominent class of indole alkaloids with great potential as pharmaceuticals. Communesins are biosynthesized by the coupling of tryptamine and aurantioclavine, two building blocks derived from L-tryptophan. The L-tryptophan decarboxylase cnsB converts L-tryptophan to tryptamine, whereas the tryptophan dimethylallyltransferase cnsF converts L-tryptophan to 4-dimethylallyl tryptophan which is further transformed to aurantioclavine by the aurantioclavine synthase cnsA, probably aided by the catalase cnsD. The cytochrome P450 monooxygenase cnsC catalyzes the heterodimeric coupling between the two different indole moieties, tryptamine and aurantioclavine, to construct vicinal quaternary stereocenters and yield the heptacyclic communesin scaffold. The O-methyltransferase cnsE then methylates the communesin scaffold to produce communesin K, the simplest characterized communesin that contains the heptacyclic core. The dioxygenase cnsJ converts communesin K into communesin I. Acylation to introduce the hexadienyl group at position N16 of communesin I by the acyltransferase cnsK leads to the production of communesin B. The hexadienyl group is produced by the highly reducing polyketide synthase cnsI, before being hydrolytically removed from cnsI by the serine hydrolase cnsH, converted into hexadienyl-CoA by the CoA ligase cnsG, and then transferred to communesin I by cnsK. Surprisingly, cnsK may also be a promiscuous acyltransferase that can tolerate a range of acyl groups, including acetyl-, propionyl-, and butyryl-CoA, which lead to communesins A, G and H respectively. The roles of the alpha-ketoglutarate-dependent dioxygenases cnsM and cnsP have still to be determined. The chain is Alpha-ketoglutarate-dependent dioxygenase cnsP from Penicillium expansum (Blue mold rot fungus).